The following is a 335-amino-acid chain: Methionine import ATP-binding protein MetN 2 (335 aa).

The region spanning 2–242 (IEFQNVHKTY…PEHPTTKRFV (241 aa)) is the ABC transporter domain. 38-45 (GHSGAGKS) is a binding site for ATP.

This sequence belongs to the ABC transporter superfamily. Methionine importer (TC 3.A.1.24) family. As to quaternary structure, the complex is composed of two ATP-binding proteins (MetN), two transmembrane proteins (MetI) and a solute-binding protein (MetQ).

The protein localises to the cell inner membrane. The catalysed reaction is L-methionine(out) + ATP + H2O = L-methionine(in) + ADP + phosphate + H(+). It catalyses the reaction D-methionine(out) + ATP + H2O = D-methionine(in) + ADP + phosphate + H(+). Part of the ABC transporter complex MetNIQ involved in methionine import. Responsible for energy coupling to the transport system. This chain is Methionine import ATP-binding protein MetN 2, found in Pseudomonas entomophila (strain L48).